We begin with the raw amino-acid sequence, 251 residues long: Haloacid dehalogenase-like hydrolase domain-containing protein 3 (251 aa).

The residue at position 15 (lysine 15) is an N6-acetyllysine; alternate. Lysine 15 carries the N6-succinyllysine; alternate modification. Lysine 130 is modified (N6-acetyllysine).

It belongs to the HAD-like hydrolase superfamily.

The sequence is that of Haloacid dehalogenase-like hydrolase domain-containing protein 3 (Hdhd3) from Mus musculus (Mouse).